The primary structure comprises 128 residues: Small ribosomal subunit protein uS9 (128 aa).

It belongs to the universal ribosomal protein uS9 family.

The sequence is that of Small ribosomal subunit protein uS9 from Flavobacterium psychrophilum (strain ATCC 49511 / DSM 21280 / CIP 103535 / JIP02/86).